We begin with the raw amino-acid sequence, 271 residues long: Phosphatidylinositol transfer protein alpha isoform (271 aa).

A 1,2-diacyl-sn-glycero-3-phospho-(1D-myo-inositol) is bound by residues Thr59, Lys61, Glu86, Asn90, Thr97, and Lys195. Position 216 is an N6-acetyllysine (Lys216). Residues Thr251–Val264 are compositionally biased toward basic and acidic residues. The segment at Thr251–Asp271 is disordered.

The protein belongs to the PtdIns transfer protein family. PI transfer class I subfamily. Post-translationally, phosphorylated by PKC in a calcium and phosphatidylserine-dependent manner. In terms of tissue distribution, expressed in a wide range of tissues.

The protein localises to the cytoplasm. Its subcellular location is the nucleus. It catalyses the reaction a 1,2-diacyl-sn-glycero-3-phosphocholine(in) = a 1,2-diacyl-sn-glycero-3-phosphocholine(out). The enzyme catalyses a 1,2-diacyl-sn-glycero-3-phospho-(1D-myo-inositol)(in) = a 1,2-diacyl-sn-glycero-3-phospho-(1D-myo-inositol)(out). With respect to regulation, phosphatidylinositol transfer activity is inhibited by N-ethylmaleimide. Catalyzes the transfer of phosphatidylinositol (PI) and phosphatidylcholine (PC) between membranes. Shows a preference for PI and PC containing shorter saturated or monosaturated acyl chains at the sn-1 and sn-2 positions. Preference order for PC is C16:1 &gt; C16:0 &gt; C18:1 &gt; C18:0 &gt; C20:4 and for PI is C16:1 &gt; C16:0 &gt; C18:1 &gt; C18:0 &gt; C20:4 &gt; C20:3. The protein is Phosphatidylinositol transfer protein alpha isoform (Pitpna) of Rattus norvegicus (Rat).